The following is a 115-amino-acid chain: UPF0235 protein CTA_0423 (115 aa).

It belongs to the UPF0235 family.

This Chlamydia trachomatis serovar A (strain ATCC VR-571B / DSM 19440 / HAR-13) protein is UPF0235 protein CTA_0423.